The sequence spans 701 residues: F-box/LRR-repeat protein 17 (701 aa).

Disordered regions lie at residues 73-93 (SAGL…RDGA), 227-250 (GGGG…CQAP), and 279-321 (VRAG…IPDI). The segment covering 81 to 90 (PLSPPPPPPR) has biased composition (pro residues). The segment covering 227–236 (GGGGPAGGGA) has biased composition (gly residues). The span at 285 to 294 (APSSAQQQPE) shows a compositional bias: polar residues. In terms of domain architecture, F-box spans 318 to 365 (IPDINQLPPSILLKIFSNLSLNERCLSASLVCKYWRDLCLDFQFWKQL).

This sequence belongs to the FBXL17 family. In terms of assembly, part of the SCF (SKP1-CUL1-F-box) E3 ubiquitin-protein ligase complex SCF(FBXL17) composed of CUL1, SKP1, RBX1 and FBXL17. Interacts with BTB domain-containing proteins such as KLHL12, BCL6 and BACH1; specifically recognizes and binds a conserved degron of non-consecutive residues present at the interface of BTB dimers of aberrant composition. Interacts with SUFU. Interacts with PRMT1.

It localises to the cytoplasm. The protein resides in the nucleus. Functionally, substrate-recognition component of the SCF(FBXL17) E3 ubiquitin ligase complex, a key component of a quality control pathway required to ensure functional dimerization of BTB domain-containing proteins (dimerization quality control, DQC). FBXL17 specifically recognizes and binds a conserved degron of non-consecutive residues present at the interface of BTB dimers of aberrant composition: aberrant BTB dimer are then ubiquitinated by the SCF(FBXL17) complex and degraded by the proteasome. The ability of the SCF(FBXL17) complex to eliminate compromised BTB dimers is required for the differentiation and survival of neural crest and neuronal cells. The SCF(FBXL17) complex mediates ubiquitination and degradation of BACH1. The SCF(FBXL17) complex is also involved in the regulation of the hedgehog/smoothened (Hh) signaling pathway by mediating the ubiquitination and degradation of SUFU, allowing the release of GLI1 from SUFU for proper Hh signal transduction. The SCF(FBXL17) complex mediates ubiquitination and degradation of PRMT1. The protein is F-box/LRR-repeat protein 17 of Mus musculus (Mouse).